The sequence spans 1862 residues: Protein RRP5 homolog (1862 aa).

Residues 1–56 form a disordered region; that stretch reads MANLEESFPRGGTRKLHKSEKSSQQVVEQDNLFDVSTEEGPIKRKKSQKGPAKTKK. N-acetylalanine is present on Ala2. Ser7 is subject to Phosphoserine. Basic residues predominate over residues 43–56; that stretch reads KRKKSQKGPAKTKK. S1 motif domains follow at residues 83–171, 187–258, 281–346, and 365–436; these read GMRI…LSVN, GMLL…LSVE, GLLV…LSLR, and GAVL…LSLR. A Phosphoserine modification is found at Ser438. 5 consecutive S1 motif domains span residues 453-522, 542-611, 636-707, 729-798, and 846-911; these read GTVV…MTLK, GLQT…LSFR, GQLV…LCRK, GMLL…LSLR, and GMVL…VSLH. Residues 999-1036 form a disordered region; the sequence is SKRTRMPVQRDSETVDDKGEEKEEEEEEEEKEEENLTV. The span at 1006-1019 shows a compositional bias: basic and acidic residues; that stretch reads VQRDSETVDDKGEE. Acidic residues predominate over residues 1020–1033; it reads KEEEEEEEEKEEEN. S1 motif domains are found at residues 1047 to 1120, 1160 to 1233, 1241 to 1309, and 1335 to 1407; these read GDKV…ISHP, GQTV…LSLI, GEVA…LSLR, and GQLL…LSLL. Disordered regions lie at residues 1406-1520 and 1545-1577; these read LLPS…STEV and REESSDSEDEQPHQAKKKKGKKERELEKQKAEK. Composition is skewed to basic and acidic residues over residues 1423 to 1437 and 1445 to 1454; these read PKQEERSGGAEEGQK and RREEKEEPQK. A Glycyl lysine isopeptide (Lys-Gly) (interchain with G-Cter in SUMO2) cross-link involves residue Lys1424. Phosphoserine occurs at positions 1468 and 1490. Residues 1566 to 1577 are compositionally biased toward basic and acidic residues; it reads KERELEKQKAEK. HAT repeat units lie at residues 1590-1622, 1696-1728, 1766-1798, and 1800-1835; these read GRQPESADDFDRLVLSSPNSSILWLQYMAFHLQ, EKYKEAGELYNRMLKRFRQEKAVWIKYGAFVLG, GDVERAKAIFENTLSTYPKRTDVWSVYIDMTIK, and GSQTAVRDIFERVIHLSLAPKRMKFFFKRYLDYEKQ.

In terms of assembly, interacts with NF-kappa-B p50/NFKB1 and NF-kappa-B p65/RELA. As to expression, ubiquitous.

It is found in the nucleus. Its subcellular location is the nucleolus. Its function is as follows. Essential for the generation of mature 18S rRNA, specifically necessary for cleavages at sites A0, 1 and 2 of the 47S precursor. Directly interacts with U3 snoRNA. The sequence is that of Protein RRP5 homolog (Pdcd11) from Mus musculus (Mouse).